The following is a 266-amino-acid chain: Lectin 7 (266 aa).

The N-terminal stretch at 1-27 (MAINTSRTQILFITIISFLILAQNVNS) is a signal peptide. N-linked (GlcNAc...) asparagine glycosylation is found at Asn-121, Asn-205, and Asn-219.

The protein belongs to the leguminous lectin family.

Functionally, may be involved in arbuscular mycorrhizal (AM) symbiosis with AM fungi. The protein is Lectin 7 of Medicago truncatula (Barrel medic).